The primary structure comprises 72 residues: Translation initiation factor IF-1 (72 aa).

Residues Met-1 to Lys-72 enclose the S1-like domain.

The protein belongs to the IF-1 family. Component of the 30S ribosomal translation pre-initiation complex which assembles on the 30S ribosome in the order IF-2 and IF-3, IF-1 and N-formylmethionyl-tRNA(fMet); mRNA recruitment can occur at any time during PIC assembly.

The protein resides in the cytoplasm. Functionally, one of the essential components for the initiation of protein synthesis. Stabilizes the binding of IF-2 and IF-3 on the 30S subunit to which N-formylmethionyl-tRNA(fMet) subsequently binds. Helps modulate mRNA selection, yielding the 30S pre-initiation complex (PIC). Upon addition of the 50S ribosomal subunit IF-1, IF-2 and IF-3 are released leaving the mature 70S translation initiation complex. This chain is Translation initiation factor IF-1, found in Pelotomaculum thermopropionicum (strain DSM 13744 / JCM 10971 / SI).